The primary structure comprises 108 residues: Histone H4 (108 aa).

The interval 1–24 (MTGRGKGGKVLSLGGKGGKGAKRH) is disordered. A DNA-binding region spans residues 17–21 (GGKGA).

Belongs to the histone H4 family. As to quaternary structure, the nucleosome is a histone octamer containing two molecules each of H2A, H2B, H3 and H4 assembled in one H3-H4 heterotetramer and two H2A-H2B heterodimers. The octamer wraps approximately 147 bp of DNA.

The protein localises to the nucleus. It is found in the chromosome. Functionally, core component of nucleosome. Nucleosomes wrap and compact DNA into chromatin, limiting DNA accessibility to the cellular machineries which require DNA as a template. Histones thereby play a central role in transcription regulation, DNA repair, DNA replication and chromosomal stability. DNA accessibility is regulated via a complex set of post-translational modifications of histones, also called histone code, and nucleosome remodeling. In Mastigamoeba balamuthi (Phreatamoeba balamuthi), this protein is Histone H4.